The chain runs to 271 residues: Formamidopyrimidine-DNA glycosylase (271 aa).

Residue Pro2 is the Schiff-base intermediate with DNA of the active site. Glu3 acts as the Proton donor in catalysis. Lys57 acts as the Proton donor; for beta-elimination activity in catalysis. The DNA site is built by His90, Arg109, and Lys151. The FPG-type zinc-finger motif lies at 236 to 270 (HVYGRGSKSCTHCGNLLSEIRLGQRTTVFCGLCQT). The Proton donor; for delta-elimination activity role is filled by Arg260.

Belongs to the FPG family. Monomer. Zn(2+) serves as cofactor.

It carries out the reaction Hydrolysis of DNA containing ring-opened 7-methylguanine residues, releasing 2,6-diamino-4-hydroxy-5-(N-methyl)formamidopyrimidine.. It catalyses the reaction 2'-deoxyribonucleotide-(2'-deoxyribose 5'-phosphate)-2'-deoxyribonucleotide-DNA = a 3'-end 2'-deoxyribonucleotide-(2,3-dehydro-2,3-deoxyribose 5'-phosphate)-DNA + a 5'-end 5'-phospho-2'-deoxyribonucleoside-DNA + H(+). Involved in base excision repair of DNA damaged by oxidation or by mutagenic agents. Acts as a DNA glycosylase that recognizes and removes damaged bases. Has a preference for oxidized purines, such as 7,8-dihydro-8-oxoguanine (8-oxoG). Has AP (apurinic/apyrimidinic) lyase activity and introduces nicks in the DNA strand. Cleaves the DNA backbone by beta-delta elimination to generate a single-strand break at the site of the removed base with both 3'- and 5'-phosphates. The chain is Formamidopyrimidine-DNA glycosylase from Shewanella denitrificans (strain OS217 / ATCC BAA-1090 / DSM 15013).